A 221-amino-acid polypeptide reads, in one-letter code: Ribonuclease T (221 aa).

One can recognise an Exonuclease domain in the interval 20 to 194 (VVIDVETAGF…YDTERTAELF (175 aa)). Mg(2+) contacts are provided by aspartate 23, glutamate 25, histidine 181, and aspartate 186. Histidine 181 (proton donor/acceptor) is an active-site residue.

This sequence belongs to the RNase T family. In terms of assembly, homodimer. The cofactor is Mg(2+).

Functionally, trims short 3' overhangs of a variety of RNA species, leaving a one or two nucleotide 3' overhang. Responsible for the end-turnover of tRNA: specifically removes the terminal AMP residue from uncharged tRNA (tRNA-C-C-A). Also appears to be involved in tRNA biosynthesis. The polypeptide is Ribonuclease T (Shewanella frigidimarina (strain NCIMB 400)).